The following is a 235-amino-acid chain: Zorya protein ZorB (235 aa).

The chain crosses the membrane as a helical span at residues Leu-25 to Val-44. An OmpA-like domain is found at Gln-87–Ala-225.

It belongs to the MotB family.

The protein localises to the cell inner membrane. Functionally, component of antiviral defense system Zorya type II, composed of ZorA, ZorB and ZorE. Expression of Zorya type II in E.coli (strain MG1655) confers resistance to phages SECphi7 and T7. While most T7 infected Zorya-containing cells undergo abortive infection, a minority produce viable phage progeny. These eventually accumulate to a high multiplicity of infection, leading to culture collapse by 170 minutes after initial infection. ZorA and ZorB probably assemble in the cell inner membrane and exert their effect there. This Escherichia coli (strain ATCC 8739 / DSM 1576 / NBRC 3972 / NCIMB 8545 / WDCM 00012 / Crooks) protein is Zorya protein ZorB.